The following is a 367-amino-acid chain: UDP-N-acetylglucosamine--N-acetylmuramyl-(pentapeptide) pyrophosphoryl-undecaprenol N-acetylglucosamine transferase (367 aa).

Residues 22 to 24 (TGG), Asn-134, Arg-170, Ser-198, Ile-253, and Gln-298 contribute to the UDP-N-acetyl-alpha-D-glucosamine site.

It belongs to the glycosyltransferase 28 family. MurG subfamily.

It localises to the cell inner membrane. The enzyme catalyses di-trans,octa-cis-undecaprenyl diphospho-N-acetyl-alpha-D-muramoyl-L-alanyl-D-glutamyl-meso-2,6-diaminopimeloyl-D-alanyl-D-alanine + UDP-N-acetyl-alpha-D-glucosamine = di-trans,octa-cis-undecaprenyl diphospho-[N-acetyl-alpha-D-glucosaminyl-(1-&gt;4)]-N-acetyl-alpha-D-muramoyl-L-alanyl-D-glutamyl-meso-2,6-diaminopimeloyl-D-alanyl-D-alanine + UDP + H(+). Its pathway is cell wall biogenesis; peptidoglycan biosynthesis. In terms of biological role, cell wall formation. Catalyzes the transfer of a GlcNAc subunit on undecaprenyl-pyrophosphoryl-MurNAc-pentapeptide (lipid intermediate I) to form undecaprenyl-pyrophosphoryl-MurNAc-(pentapeptide)GlcNAc (lipid intermediate II). This chain is UDP-N-acetylglucosamine--N-acetylmuramyl-(pentapeptide) pyrophosphoryl-undecaprenol N-acetylglucosamine transferase, found in Xylella fastidiosa (strain M23).